We begin with the raw amino-acid sequence, 470 residues long: MIPVTTLKDRKVALFGLGGSGFATARALIAGGAEVTAWDDNPDSVAKASAEGIRTEDLHGIDWSQQALFVLSPGVPLTHPKPHWTVDLARAAGVDIVGDVELFVRERRAHAPDCPFIAITGTNGKSTTTALIAHILKSAGYDTQLGGNIGTAVLTLDPPKAGRYYVVECSSYQIDLAPTLNPSAGILLNLTPDHLDRHGTMQHYADVKERLVAGSDVAIVGIDDSHSALIADRVERAGVKVVRISRRNAVASGIYAEGIRLVQAVGGAMLPFADLDGIQTLRGSHNAQNAAAAVAACLAVGVSADAIRAGLASFPGLKHRMQPVGKRGRVVFVNDSKATNADAAAPALSSYDRIYWIAGGLPKAGGITTLAPYFPRIAKAYLIGEAAAEFAATLGEAVPYEISGTLERAVAHAAADAERDEAAASAVMLSPACASFDQYRNFEVRGDAFVSHVAALDGMTMLIGPATGEK.

121–127 (GTNGKST) is a binding site for ATP.

The protein belongs to the MurCDEF family.

The protein localises to the cytoplasm. The enzyme catalyses UDP-N-acetyl-alpha-D-muramoyl-L-alanine + D-glutamate + ATP = UDP-N-acetyl-alpha-D-muramoyl-L-alanyl-D-glutamate + ADP + phosphate + H(+). Its pathway is cell wall biogenesis; peptidoglycan biosynthesis. Its function is as follows. Cell wall formation. Catalyzes the addition of glutamate to the nucleotide precursor UDP-N-acetylmuramoyl-L-alanine (UMA). In Rhizobium etli (strain ATCC 51251 / DSM 11541 / JCM 21823 / NBRC 15573 / CFN 42), this protein is UDP-N-acetylmuramoylalanine--D-glutamate ligase.